Consider the following 256-residue polypeptide: Omega-amidase YafV (256 aa).

In terms of domain architecture, CN hydrolase spans 4–234 (LKITLLQQPL…ATRIDAELSM (231 aa)). Glu-42 serves as the catalytic Proton acceptor. Catalysis depends on Lys-107, which acts as the Proton donor. Catalysis depends on Cys-141, which acts as the Nucleophile.

Belongs to the carbon-nitrogen hydrolase superfamily. NIT1/NIT2 family.

It catalyses the reaction a monoamide of a dicarboxylate + H2O = a dicarboxylate + NH4(+). Functionally, hydrolyzes alpha-ketoglutaramate (a-KGM) to alpha-ketoglutarate (alpha-KG) and ammonia, has weak activity on L-glutamine, almost no activity on deaminated glutathione (dGSH) and none on glutathione. May function as a metabolite repair enzyme. This Escherichia coli (strain K12) protein is Omega-amidase YafV (yafV).